A 376-amino-acid chain; its full sequence is MAYTTFSQTKNDQLKEPMFFGQPVNVARYDQQKYDIFEKLIEKQLSFFWRPEEVDVSRDRIDYQALPEHEKHIFISNLKYQTLLDSIQGRSPNVALLPLISIPELETWVETWAFSETIHSRSYTHIIRNIVNDPSVVFDDIVTNEQIQKRAEGISSYYDELIEMTSYWHLLGEGTHTVNGKTVTVSLRELKKKLYLCLMSVNALEAIRFYVSFACSFAFAERELMEGNAKIIRLIARDEALHLTGTQHMLNLLRSGADDPEMAEIAEECKQECYDLFVQAAQQEKDWADYLFRDGSMIGLNKDILCQYVEYITNIRMQAVGLDLPFQTRSNPIPWINTWLVSDNVQVAPQEVEVSSYLVGQIDSEVDTDDLSNFQL.

Residues Asp85, Glu116, and His119 each contribute to the Fe cation site. The active site involves Tyr123. Glu205, Glu239, and His242 together coordinate Fe cation.

This sequence belongs to the ribonucleoside diphosphate reductase small chain family. Tetramer of two alpha (R1) and two beta (R2) subunits. The B1 protein is a dimer of alpha subunits. A radical transfer pathway occurs between Tyr-123 of R2 and R1. The cofactor is Fe cation.

It carries out the reaction a 2'-deoxyribonucleoside 5'-diphosphate + [thioredoxin]-disulfide + H2O = a ribonucleoside 5'-diphosphate + [thioredoxin]-dithiol. Its function is as follows. Provides the precursors necessary for DNA synthesis. Catalyzes the biosynthesis of deoxyribonucleotides from the corresponding ribonucleotides. R2 contains the tyrosyl radical required for catalysis. The protein is Ribonucleoside-diphosphate reductase 1 subunit beta (nrdB) of Escherichia coli O157:H7.